An 86-amino-acid polypeptide reads, in one-letter code: Probable protein BRICK1 (86 aa).

Residues 47–81 (EATTKSKLASLNEKLDILERKLEVLEVQVSSATTN) are a coiled coil.

The protein belongs to the BRK1 family. In terms of assembly, binds SCAR.

The protein localises to the cytoplasm. It is found in the cytoskeleton. Functionally, involved in regulation of actin and microtubule organization. Part of a WAVE complex that activates the Arp2/3 complex. This Oryza sativa subsp. japonica (Rice) protein is Probable protein BRICK1.